The chain runs to 58 residues: Preprotein translocase subunit SecG (58 aa).

Residues 1-32 are Cytoplasmic-facing; the sequence is MAQKKKSSGSGLMSSAGLMTYYDADKKAIHVQ. The chain crosses the membrane as a helical span at residues 33-54; the sequence is PKTVFIFGAICGIVILAFSAGF. Residues 55–58 lie on the Extracellular side of the membrane; it reads GLWP.

The protein belongs to the SEC61-beta family. In terms of assembly, component of the protein translocase complex. Heterotrimer consisting of alpha (SecY), beta (SecG) and gamma (SecE) subunits. Can form oligomers of the heterotrimer.

It is found in the cell membrane. In terms of biological role, involved in protein export. The function of the beta subunit is unknown, but it may be involved in stabilization of the trimeric complex. This Methanococcoides burtonii (strain DSM 6242 / NBRC 107633 / OCM 468 / ACE-M) protein is Preprotein translocase subunit SecG.